The following is a 79-amino-acid chain: Sec-independent protein translocase protein TatA (79 aa).

A helical membrane pass occupies residues 1 to 21; sequence MGGFTSIWHWVIVLLVIVLLF. The disordered stretch occupies residues 48–79; sequence EEEAKNEPKTLDAQATQTKVHESSEIKSKQES. Residues 66-79 are compositionally biased toward basic and acidic residues; the sequence is KVHESSEIKSKQES.

This sequence belongs to the TatA/E family. As to quaternary structure, the Tat system comprises two distinct complexes: a TatABC complex, containing multiple copies of TatA, TatB and TatC subunits, and a separate TatA complex, containing only TatA subunits. Substrates initially bind to the TatABC complex, which probably triggers association of the separate TatA complex to form the active translocon.

The protein localises to the cell inner membrane. Part of the twin-arginine translocation (Tat) system that transports large folded proteins containing a characteristic twin-arginine motif in their signal peptide across membranes. TatA could form the protein-conducting channel of the Tat system. This is Sec-independent protein translocase protein TatA from Helicobacter pylori (strain ATCC 700392 / 26695) (Campylobacter pylori).